The sequence spans 166 residues: Large ribosomal subunit protein uL10 (166 aa).

Belongs to the universal ribosomal protein uL10 family. Part of the ribosomal stalk of the 50S ribosomal subunit. The N-terminus interacts with L11 and the large rRNA to form the base of the stalk. The C-terminus forms an elongated spine to which L12 dimers bind in a sequential fashion forming a multimeric L10(L12)X complex.

Functionally, forms part of the ribosomal stalk, playing a central role in the interaction of the ribosome with GTP-bound translation factors. The chain is Large ribosomal subunit protein uL10 from Listeria monocytogenes serotype 4b (strain CLIP80459).